We begin with the raw amino-acid sequence, 453 residues long: Nuclear distribution protein PAC1-2 (453 aa).

The LisH domain maps to 9–41 (QADELHKSIVAYLTANNLSTTAATLREELSLGE). Positions 63–87 (VVRLQKKVMDLESRSVALQSELEHS) form a coiled coil. Residues 84–108 (LEHSTPASLSKRKDPTSWLPRSPPR) form a disordered region. 7 WD repeats span residues 113–154 (SHQA…RTLK), 156–196 (HTRA…KNTR), 200–243 (GHDH…CIKT), 246–285 (GHTG…PESK), 290–350 (GHEN…IKTL), 352–391 (GHDN…RCVK), and 396–448 (AHGQ…DKVV).

Belongs to the WD repeat LIS1/nudF family. As to quaternary structure, self-associates. Interacts with NDL1 and dynein.

The protein localises to the cytoplasm. It is found in the cytoskeleton. Its subcellular location is the spindle pole. Positively regulates the activity of the minus-end directed microtubule motor protein dynein. May enhance dynein-mediated microtubule sliding by targeting dynein to the microtubule plus end. Required for nuclear migration during vegetative growth as well as development. Required for retrograde early endosome (EE) transport from the hyphal tip. Required for localization of dynein to the mitotic spindle poles. Recruits additional proteins to the dynein complex at SPBs. The polypeptide is Nuclear distribution protein PAC1-2 (Chaetomium globosum (strain ATCC 6205 / CBS 148.51 / DSM 1962 / NBRC 6347 / NRRL 1970) (Soil fungus)).